Here is a 614-residue protein sequence, read N- to C-terminus: Inactive leucine-rich repeat receptor-like serine/threonine-protein kinase At5g24100 (614 aa).

The first 21 residues, 1–21 (MSRGRSFIFYFVLFLFFGSSA), serve as a signal peptide directing secretion. Over 22 to 251 (LYSQVTGDLA…KNGIYISEPA (230 aa)) the chain is Extracellular. Asparagine 53 carries N-linked (GlcNAc...) asparagine glycosylation. 6 LRR repeats span residues 71–95 (GTRV…TISR), 96–120 (LSEL…FLQL), 121–146 (KKLK…TWTN), 148–167 (TVLD…GFAN), 168–190 (LTGL…DLNL), and 191–214 (PGLR…LKRF). Asparagine 146, asparagine 158, and asparagine 167 each carry an N-linked (GlcNAc...) asparagine glycan. 2 N-linked (GlcNAc...) asparagine glycosylation sites follow: asparagine 197 and asparagine 202. A helical transmembrane segment spans residues 252 to 272 (ILGIAISVCFVIFFVIAVVII). The Cytoplasmic segment spans residues 273–614 (VCYVKRQRKS…VETLEEIERD (342 aa)). Residues 341 to 611 (IASAEFLGKG…VKVVETLEEI (271 aa)) form the Protein kinase domain. At serine 343 the chain carries Phosphoserine. ATP-binding positions include 347-355 (LGKGVFGMT) and lysine 369. A Phosphoserine modification is found at serine 420. A phosphothreonine mark is found at threonine 441, threonine 514, and threonine 591. An LRR 7 repeat occupies 578 to 601 (AKLLQMLQLGTSCTAMVPAKRPDM).

The protein belongs to the protein kinase superfamily. Ser/Thr protein kinase family.

It localises to the cell membrane. This is Inactive leucine-rich repeat receptor-like serine/threonine-protein kinase At5g24100 from Arabidopsis thaliana (Mouse-ear cress).